We begin with the raw amino-acid sequence, 500 residues long: Lysine--tRNA ligase (500 aa).

Residues Glu-409 and Glu-416 each contribute to the Mg(2+) site.

Belongs to the class-II aminoacyl-tRNA synthetase family. Homodimer. It depends on Mg(2+) as a cofactor.

Its subcellular location is the cytoplasm. The catalysed reaction is tRNA(Lys) + L-lysine + ATP = L-lysyl-tRNA(Lys) + AMP + diphosphate. The polypeptide is Lysine--tRNA ligase (Lysinibacillus sphaericus (strain C3-41)).